The chain runs to 370 residues: L-lactate oxidase (370 aa).

An FMN hydroxy acid dehydrogenase domain is found at 8–367 (DPDGMPVTLS…TPDLLTGFSG (360 aa)). Tyrosine 34 lines the pyruvate pocket. Residues 87–89 (PMA), serine 116, and glutamine 136 contribute to the FMN site. Residue tyrosine 138 coordinates pyruvate. Threonine 164 contacts FMN. Arginine 173 provides a ligand contact to pyruvate. Positions 238 and 260 each coordinate FMN. Histidine 262 and arginine 265 together coordinate pyruvate. Histidine 262 acts as the Proton acceptor in catalysis. FMN is bound by residues 293 to 297 (DGGIR) and arginine 317.

This sequence belongs to the FMN-dependent alpha-hydroxy acid dehydrogenase family. Homotetramer. FMN is required as a cofactor.

It catalyses the reaction (S)-lactate + O2 = pyruvate + H2O2. The catalysed reaction is a (2S)-2-hydroxycarboxylate + O2 = a 2-oxocarboxylate + H2O2. It carries out the reaction glycolate + O2 = glyoxylate + H2O2. The enzyme catalyses 2-hydroxyoctadecanoate + O2 = 2-oxooctadecanoate + H2O2. In terms of biological role, catalyzes the oxidation of (S)-lactate (L-lactate) to pyruvate, with a reduction of O2 to H2O2. Is also able to use glycolate and to a lesser extent 2-hydroxyoctadecanoate as substrate. The protein is L-lactate oxidase of Roseobacter sp. (strain GAI101).